The primary structure comprises 429 residues: Integral membrane protein GPR137C (429 aa).

The span at 1–17 shows a compositional bias: low complexity; it reads MRVSVPGPAAAAAPAAG. Positions 1-29 are disordered; it reads MRVSVPGPAAAAAPAAGREPSTPGGGSGG. The Lumenal portion of the chain corresponds to 1-48; it reads MRVSVPGPAAAAAPAAGREPSTPGGGSGGGGAVAAASGAAVPGSVQLA. A helical transmembrane segment spans residues 49 to 69; it reads LSVLHALLYAALFAFAYLQLW. The Cytoplasmic portion of the chain corresponds to 70-83; sequence RLLLYRERRLSYQS. Residues 84–104 form a helical membrane-spanning segment; the sequence is LCLFLCLLWAALRTTLFSAAF. Residues 105-120 lie on the Lumenal side of the membrane; it reads SLSGSLPLLRPPAHLH. A helical membrane pass occupies residues 121 to 141; that stretch reads FFPHWLLYCFPSCLQFSTLCL. Over 142–167 the chain is Cytoplasmic; that stretch reads LNLYLAEVICKVRCATELDRHKILLH. Residues 168 to 188 traverse the membrane as a helical segment; sequence LGFIMASLLFLVVNLTCAMLV. The Lumenal segment spans residues 189 to 205; sequence HGDVPENQLKWTVFVRA. Residues 206-226 form a helical membrane-spanning segment; sequence LINDSLFILCAISLVCYICKI. Topologically, residues 227 to 246 are cytoplasmic; sequence TKMSSANVYLESKGMSLCQT. The helical transmembrane segment at 247–267 threads the bilayer; that stretch reads VVVGSVVILLYSSRACYNLVV. The Lumenal segment spans residues 268-300; it reads VTISQDTLESPFNYGWDNLSDKAHVEDISGEEY. N-linked (GlcNAc...) asparagine glycosylation occurs at N285. A helical membrane pass occupies residues 301-321; sequence IVFGMVLFLWEHVPAWSVVLF. Over 322–429 the chain is Cytoplasmic; that stretch reads FRAQRLNQNL…HHSLYVTPQN (108 aa).

Belongs to the GPR137 family.

The protein resides in the lysosome membrane. Lysosomal integral membrane protein that may regulate MTORC1 complex translocation to lysosomes. The sequence is that of Integral membrane protein GPR137C (GPR137C) from Homo sapiens (Human).